A 359-amino-acid chain; its full sequence is Aminomethyltransferase (359 aa).

The protein belongs to the GcvT family. In terms of assembly, the glycine cleavage system is composed of four proteins: P, T, L and H.

The catalysed reaction is N(6)-[(R)-S(8)-aminomethyldihydrolipoyl]-L-lysyl-[protein] + (6S)-5,6,7,8-tetrahydrofolate = N(6)-[(R)-dihydrolipoyl]-L-lysyl-[protein] + (6R)-5,10-methylene-5,6,7,8-tetrahydrofolate + NH4(+). Its function is as follows. The glycine cleavage system catalyzes the degradation of glycine. This is Aminomethyltransferase from Alcanivorax borkumensis (strain ATCC 700651 / DSM 11573 / NCIMB 13689 / SK2).